Consider the following 233-residue polypeptide: 2,3,4,5-tetrahydropyridine-2,6-dicarboxylate N-acetyltransferase (233 aa).

This sequence belongs to the transferase hexapeptide repeat family. DapH subfamily.

It carries out the reaction (S)-2,3,4,5-tetrahydrodipicolinate + acetyl-CoA + H2O = L-2-acetamido-6-oxoheptanedioate + CoA. It functions in the pathway amino-acid biosynthesis; L-lysine biosynthesis via DAP pathway; LL-2,6-diaminopimelate from (S)-tetrahydrodipicolinate (acetylase route): step 1/3. Its function is as follows. Catalyzes the transfer of an acetyl group from acetyl-CoA to tetrahydrodipicolinate. The sequence is that of 2,3,4,5-tetrahydropyridine-2,6-dicarboxylate N-acetyltransferase from Enterococcus faecalis (strain ATCC 700802 / V583).